The primary structure comprises 306 residues: Pantothenate kinase (306 aa).

An ATP-binding site is contributed by glycine 90–serine 97.

Belongs to the prokaryotic pantothenate kinase family.

The protein localises to the cytoplasm. It carries out the reaction (R)-pantothenate + ATP = (R)-4'-phosphopantothenate + ADP + H(+). The protein operates within cofactor biosynthesis; coenzyme A biosynthesis; CoA from (R)-pantothenate: step 1/5. This chain is Pantothenate kinase (coaA), found in Listeria innocua serovar 6a (strain ATCC BAA-680 / CLIP 11262).